The primary structure comprises 221 residues: Lactate racemization regulatory protein (221 aa).

Residues 139–213 enclose the HTH crp-type domain; it reads NGKKGAICAF…NHKFIIQDVS (75 aa). Positions 172–192 form a DNA-binding region, H-T-H motif; that stretch reads NDDIAGFCGISSRSSVNRMLK.

In terms of assembly, multimerizes on DNA. Multimerization is required for transcription activation.

With respect to regulation, L-lactate acts as a positive effector on the binding and multimerization of LarR on DNA, while D-lactate antagonizes the positive effect of L-lactate. In terms of biological role, positive transcriptional regulator that is absolutely required for the expression of lactate racemase (Lar) activity. Controls Lar expression by sensing the L-/D-lactate ration. Binds to a 16-bp palindromic sequence (Lar box motif) that is present in the larR-larA intergenic region, allowing transcription of the larABCDE operon. The sequence is that of Lactate racemization regulatory protein from Lactiplantibacillus plantarum (strain ATCC BAA-793 / NCIMB 8826 / WCFS1) (Lactobacillus plantarum).